The sequence spans 95 residues: Scytovirin (95 aa).

An SD1 region spans residues 3-41 (GPTYCWNEANNPGGPNRCSNNKQCDGARTCSSSGFCQGT). 5 disulfide bridges follow: cysteine 7–cysteine 55, cysteine 20–cysteine 32, cysteine 26–cysteine 38, cysteine 68–cysteine 80, and cysteine 74–cysteine 86. Residues 51–89 (GPTYCWDEAKNPGGPNRCSNSKQCDGARTCSSSGFCQGT) are SD2.

Its function is as follows. Has strong anti-HIV activity against T-tropic strains of HIV-1 and weaker activity against M-tropic strains of HIV-1. Inhibits HIV-1 fusion and infection of CD4 LTR beta-gal cells in vitro. Inhibits fusion of HIV infected CEM-SS cells with uninfected CEM-SS cells, and fusion of HIV-1 Env expressing HL2/3 cells with CD4 LTR beta-gal cells. Binds to HIV gp120, HIV gp160 and to a lesser extent HIV gp41. Binding to HIV gp120 is glycosylation dependent. Binds with high specificity to the tetrasaccharide Man-alpha-1,2-Man-alpha-1,6-Man-alpha-1,6-Man and also binds the higher-order oligosaccharides oligomannose 8 and oligomannose 9. Does not bind to monosaccharides, complex or hybrid N-linked oligosaccharides or chitin. This Scytonema varium protein is Scytovirin.